Reading from the N-terminus, the 97-residue chain is MLKMNLANLQLFAHKKGGGSTSNGRDSQAKRLGAKAADGQTVSGGSILYRQRGTHIYPGANVGRGGDDTLFAKVEGVVRFERKGRDKKQVSVYPIAK.

A propeptide spanning residues 1 to 12 (MLKMNLANLQLF) is cleaved from the precursor. The tract at residues 14-37 (HKKGGGSTSNGRDSQAKRLGAKAA) is disordered.

Belongs to the bacterial ribosomal protein bL27 family. In terms of processing, the N-terminus is cleaved by ribosomal processing cysteine protease Prp.

This chain is Large ribosomal subunit protein bL27, found in Streptococcus agalactiae serotype III (strain NEM316).